Reading from the N-terminus, the 96-residue chain is Co-chaperonin GroES (96 aa).

It belongs to the GroES chaperonin family. In terms of assembly, heptamer of 7 subunits arranged in a ring. Interacts with the chaperonin GroEL.

It localises to the cytoplasm. Functionally, together with the chaperonin GroEL, plays an essential role in assisting protein folding. The GroEL-GroES system forms a nano-cage that allows encapsulation of the non-native substrate proteins and provides a physical environment optimized to promote and accelerate protein folding. GroES binds to the apical surface of the GroEL ring, thereby capping the opening of the GroEL channel. This chain is Co-chaperonin GroES, found in Tremblaya princeps.